Consider the following 890-residue polypeptide: Bacteriocin BCN5 (890 aa).

2 consecutive SH3b domains span residues 22-84 (PPNA…TNAT) and 179-241 (ENNA…TNAT). A Peptidase M14 domain is found at 303–549 (GYVKYEGAAA…RYLQKIINAV (247 aa)). Zn(2+) is bound by residues H358, E361, and H475. E525 (proton donor/acceptor) is an active-site residue. The 65-residue stretch at 572-636 (EATGEVINVQ…VNSGYIIILK (65 aa)) folds into the SH3b 3 domain. Residues 815–869 (KALAAAVIVNGVETMFCAFLGGFIAQCIAPEFPIVAAVAGAIVSAIAAFAIGYFV) are hydrophobic.

It depends on Zn(2+) as a cofactor.

Functionally, may function as an ionophore. In Clostridium perfringens, this protein is Bacteriocin BCN5 (bcn).